The sequence spans 324 residues: Disintegrin-like/cysteine-rich protein MPIII-3 (324 aa).

A signal peptide spans 1–20 (MIQVLLVIICLAVFPYQVSS). Positions 21–173 (IILESGNINN…DEDPKKCEFR (153 aa)) are cleaved as a propeptide — or 174 (in a minor form). The Disintegrin; truncated domain occupies 168 to 207 (KKCEFRRAGTECRPARSECDVAEYCTGQSAECPTDVFHSN). An inhibits platelet aggregation region spans residues 179–192 (CRPARSECDVAEYC). 9 disulfides stabilise this stretch: Cys179-Cys199, Cys186-Cys218, Cys192-Cys199, Cys211-Cys223, Cys230-Cys280, Cys245-Cys287, Cys258-Cys268, Cys275-Cys312, and Cys306-Cys317. The short motif at 185–187 (ECD) is the D/ECD-tripeptide element. Ca(2+) is bound by residues Asp187 and Glu190. Ca(2+) is bound by residues Asp202 and Val203. Asn237 is a glycosylation site (N-linked (GlcNAc...) asparagine).

This sequence belongs to the venom metalloproteinase (M12B) family. P-III subfamily. P-IIIe sub-subfamily. As to quaternary structure, monomer. Is able to form a homodimer. In terms of processing, N-glycosylated. Exists in at least six differently N-glycosylated forms. The glycans likely have a stabilizing purpose. Post-translationally, cys-199 forms a disulfide bond with Cys-192 in 90% and with Cys-179 in 10% of the protein molecules; alternative disulfide bonds may have a major effect on the conformation of the protein. In terms of tissue distribution, expressed by the venom gland (at protein level). Expressed by the venom gland.

The protein localises to the secreted. With respect to regulation, activity may be regulated by the intramolecular thiol-disulfide exchange or disulfide bond switching. Abolishes platelet aggregation induced by collagen, ADP (IC(50)=292 nM) and arachidonic-acid. The inhibition of collagen-induced platelet aggregation may be due to its ability to bind collagen and block the binding site on collagen for platelets and/or to its ability to bind to the platelet alpha-2/beta-1 collagen receptor (ITGA2/ITGB1) to block its interaction with collagen and hence prevent platelet stimulation. The inhibition of ADP- or arachidonic-acid-induced platelet aggregation may be due to it acting as an antagonist of the ADP receptors or thromboxane-prostanoid receptors of the platelets, respectively. Does not interact with integrins alpha-IIb (ITGA2B) or beta-3 (ITGB3) nor platelet glycoproteins VI (GP6) or IX (GP9) in vitro, however, the detection is dependent on experimental conditions and may happen in vivo. Able to bind to platelet glycoprotein Ib alpha chain (GP1BA) receptor in vitro, although this interaction may have pathologically only limited effect in vivo as it is not able to abolish the von Willebrand factor (vWF)-dependent platelet agglutination induced by ristocetin. Does not affect blood coagulation. The polypeptide is Disintegrin-like/cysteine-rich protein MPIII-3 (Vipera ammodytes ammodytes (Western sand viper)).